The following is a 142-amino-acid chain: Large ribosomal subunit protein uL11 (142 aa).

In terms of assembly, part of the ribosomal stalk of the 50S ribosomal subunit. Interacts with L10 and the large rRNA to form the base of the stalk. L10 forms an elongated spine to which L12 dimers bind in a sequential fashion forming a multimeric L10(L12)X complex. Lys-40 is trimethylated or acetylated; other modifications may also exist.

Its function is as follows. Forms part of the ribosomal stalk which helps the ribosome interact with GTP-bound translation factors. The polypeptide is Large ribosomal subunit protein uL11 (Rhodopseudomonas palustris (strain ATCC BAA-98 / CGA009)).